A 493-amino-acid polypeptide reads, in one-letter code: Ketol-acid reductoisomerase (NADP(+)) (493 aa).

The region spanning 14-208 (LDQLGRCRFM…GGHRAGVLES (195 aa)) is the KARI N-terminal Rossmann domain. Residues 45-48 (CGAQ), arginine 68, arginine 76, serine 78, and 108-110 (DKQ) contribute to the NADP(+) site. The active site involves histidine 132. Position 158 (glycine 158) interacts with NADP(+). 2 KARI C-terminal knotted domains span residues 209–345 (SFVA…APKG) and 346–486 (ENIK…MTDM). Mg(2+)-binding residues include aspartate 217, glutamate 221, glutamate 390, and glutamate 394. Serine 415 contacts substrate.

The protein belongs to the ketol-acid reductoisomerase family. Mg(2+) is required as a cofactor.

It catalyses the reaction (2R)-2,3-dihydroxy-3-methylbutanoate + NADP(+) = (2S)-2-acetolactate + NADPH + H(+). The enzyme catalyses (2R,3R)-2,3-dihydroxy-3-methylpentanoate + NADP(+) = (S)-2-ethyl-2-hydroxy-3-oxobutanoate + NADPH + H(+). The protein operates within amino-acid biosynthesis; L-isoleucine biosynthesis; L-isoleucine from 2-oxobutanoate: step 2/4. Its pathway is amino-acid biosynthesis; L-valine biosynthesis; L-valine from pyruvate: step 2/4. In terms of biological role, involved in the biosynthesis of branched-chain amino acids (BCAA). Catalyzes an alkyl-migration followed by a ketol-acid reduction of (S)-2-acetolactate (S2AL) to yield (R)-2,3-dihydroxy-isovalerate. In the isomerase reaction, S2AL is rearranged via a Mg-dependent methyl migration to produce 3-hydroxy-3-methyl-2-ketobutyrate (HMKB). In the reductase reaction, this 2-ketoacid undergoes a metal-dependent reduction by NADPH to yield (R)-2,3-dihydroxy-isovalerate. This is Ketol-acid reductoisomerase (NADP(+)) from Histophilus somni (strain 2336) (Haemophilus somnus).